The sequence spans 1010 residues: Retinoblastoma-related protein 1 (1010 aa).

A disordered region spans residues 1–23; that stretch reads MEGAAPPASSGSEVTGAGSGKVD. Residues 419–619 are domain A; sequence TPVSTAMTTA…EKGSSMYNSL (201 aa). The pocket stretch occupies residues 419–861; sequence TPVSTAMTTA…NEVFIPTVKP (443 aa). Positions 620–730 are spacer; sequence IVARPTLSAE…PAAGGELCAE (111 aa). The segment at 657-679 is disordered; sequence LPPLPFQKQEHSPDKDEVRSPKR. Residues 664-679 are compositionally biased toward basic and acidic residues; sequence KQEHSPDKDEVRSPKR. The domain B stretch occupies residues 731-861; it reads TGIGVFLSKI…NEVFIPTVKP (131 aa). Positions 868–898 are disordered; it reads SGTSPNKKNEEKCAADGPYPESPRLSRFPNL.

It belongs to the retinoblastoma protein (RB) family.

Its subcellular location is the nucleus. In terms of biological role, regulator of biological processes that recruits a histone deacetylase to control gene transcription. May play a role in the entry into mitosis, negatively regulating the cell proliferation. Formation of stable complexes with geminiviridae replication-associated proteins may create a cellular environment which favors viral DNA replication. The protein is Retinoblastoma-related protein 1 (RBR1) of Oryza sativa subsp. indica (Rice).